Consider the following 179-residue polypeptide: Large ribosomal subunit protein uL5 (179 aa).

Belongs to the universal ribosomal protein uL5 family. In terms of assembly, part of the 50S ribosomal subunit; part of the 5S rRNA/L5/L18/L25 subcomplex. Contacts the 5S rRNA and the P site tRNA. Forms a bridge to the 30S subunit in the 70S ribosome.

This is one of the proteins that bind and probably mediate the attachment of the 5S RNA into the large ribosomal subunit, where it forms part of the central protuberance. In the 70S ribosome it contacts protein S13 of the 30S subunit (bridge B1b), connecting the 2 subunits; this bridge is implicated in subunit movement. Contacts the P site tRNA; the 5S rRNA and some of its associated proteins might help stabilize positioning of ribosome-bound tRNAs. This chain is Large ribosomal subunit protein uL5, found in Dichelobacter nodosus (strain VCS1703A).